A 122-amino-acid chain; its full sequence is Large ribosomal subunit protein uL14 (122 aa).

It belongs to the universal ribosomal protein uL14 family. In terms of assembly, part of the 50S ribosomal subunit. Forms a cluster with proteins L3 and L19. In the 70S ribosome, L14 and L19 interact and together make contacts with the 16S rRNA in bridges B5 and B8.

In terms of biological role, binds to 23S rRNA. Forms part of two intersubunit bridges in the 70S ribosome. This Thermotoga maritima (strain ATCC 43589 / DSM 3109 / JCM 10099 / NBRC 100826 / MSB8) protein is Large ribosomal subunit protein uL14.